The following is a 772-amino-acid chain: Phenylalanine--tRNA ligase beta subunit (772 aa).

Positions 40–158 (IKPSTNLVFA…DHYKTPNQIF (119 aa)) constitute a tRNA-binding domain. The B5 domain occupies 397 to 468 (SVHNVIKNKI…KKISIQEIKP (72 aa)). Positions 446, 452, 455, and 456 each coordinate Mg(2+). Residues 691–772 (SMYHDVIRDI…QEVNNYLKQF (82 aa)) form the FDX-ACB domain.

The protein belongs to the phenylalanyl-tRNA synthetase beta subunit family. Type 1 subfamily. In terms of assembly, tetramer of two alpha and two beta subunits. Requires Mg(2+) as cofactor.

The protein resides in the cytoplasm. It catalyses the reaction tRNA(Phe) + L-phenylalanine + ATP = L-phenylalanyl-tRNA(Phe) + AMP + diphosphate + H(+). This chain is Phenylalanine--tRNA ligase beta subunit (pheT), found in Ureaplasma parvum serovar 3 (strain ATCC 700970).